Consider the following 55-residue polypeptide: Large ribosomal subunit protein bL33 (55 aa).

It belongs to the bacterial ribosomal protein bL33 family.

The chain is Large ribosomal subunit protein bL33 from Dehalococcoides mccartyi (strain ATCC BAA-2100 / JCM 16839 / KCTC 5957 / BAV1).